The primary structure comprises 97 residues: MQLSTALLFLLLTATSFTSQVLAHPGSIPTSCCFTMTSKKIPNTLLKSYKRITNNRCTLKAIVFKTKLGKEICADPKKKWVQDATKHLDQKLQTPKP.

The signal sequence occupies residues 1–23; that stretch reads MQLSTALLFLLLTATSFTSQVLA. 2 cysteine pairs are disulfide-bonded: C32-C57 and C33-C73. O-linked (GalNAc...) threonine glycosylation is present at T94.

This sequence belongs to the intercrine beta (chemokine CC) family.

Its subcellular location is the secreted. In terms of biological role, in response to the presence of allergens, this protein directly promotes the accumulation of eosinophils (a prominent feature of allergic inflammatory reactions), but not lymphocytes, macrophages or neutrophils. Binds to CCR3. This chain is Eotaxin (Ccl11), found in Rattus norvegicus (Rat).